The chain runs to 274 residues: MREYLNFLKYIKDNGTKKGDRTGTGTTSIFGYQMRFDLQQGFPLVTTKKIHIPSVVHELLWFLSGSTNVKYLNDNKVRIWNEWATEEGELGPIYGKQWRDFNGEGIDQIAEVIEMLKTNPNSRRILVSAWNPCVVPSEKISPQENVAKGNSALPPCHAMFQFYIADNKLSCMLTQRSADAFLGVPFNIASYSLLTHMIAQQCDLDVGEFIWSGGDCHIYNNHIEQVNEQLSREPLDLPTLKILRKPSSIFDYKYEDFEFQNYKHHPAIKAKISV.

Arg21 provides a ligand contact to dUMP. (6R)-5,10-methylene-5,6,7,8-tetrahydrofolate is bound at residue His51. A dUMP-binding site is contributed by 123 to 124; sequence RR. Catalysis depends on Cys156, which acts as the Nucleophile. Residues 176-179, Asn187, and 217-219 contribute to the dUMP site; these read RSAD and HIY. Asp179 contacts (6R)-5,10-methylene-5,6,7,8-tetrahydrofolate. Ser273 lines the (6R)-5,10-methylene-5,6,7,8-tetrahydrofolate pocket.

Belongs to the thymidylate synthase family. Bacterial-type ThyA subfamily. Homodimer.

The protein resides in the cytoplasm. The enzyme catalyses dUMP + (6R)-5,10-methylene-5,6,7,8-tetrahydrofolate = 7,8-dihydrofolate + dTMP. It functions in the pathway pyrimidine metabolism; dTTP biosynthesis. Its function is as follows. Catalyzes the reductive methylation of 2'-deoxyuridine-5'-monophosphate (dUMP) to 2'-deoxythymidine-5'-monophosphate (dTMP) while utilizing 5,10-methylenetetrahydrofolate (mTHF) as the methyl donor and reductant in the reaction, yielding dihydrofolate (DHF) as a by-product. This enzymatic reaction provides an intracellular de novo source of dTMP, an essential precursor for DNA biosynthesis. The polypeptide is Thymidylate synthase (Francisella philomiragia subsp. philomiragia (strain ATCC 25017 / CCUG 19701 / FSC 153 / O#319-036)).